A 98-amino-acid chain; its full sequence is MSSYKYYDLIRRPVITEKTTLLSEQNKYTFYVDKLAEKLAVKKAIEEIFKVKVKKVNILNVKGKKKRFKGVIGRQVDRKKAVVTLEKDHNIDFAGGIK.

The protein belongs to the universal ribosomal protein uL23 family. In terms of assembly, part of the 50S ribosomal subunit. Contacts protein L29, and trigger factor when it is bound to the ribosome.

In terms of biological role, one of the early assembly proteins it binds 23S rRNA. One of the proteins that surrounds the polypeptide exit tunnel on the outside of the ribosome. Forms the main docking site for trigger factor binding to the ribosome. The sequence is that of Large ribosomal subunit protein uL23 from Rickettsia bellii (strain OSU 85-389).